A 413-amino-acid chain; its full sequence is NPL4-like protein 2 (413 aa).

The residue at position 104 (Ser104) is a Phosphoserine. An MPN domain is found at 131–272; that stretch reads SVSFDRDAAN…ADVHFEAFQM (142 aa).

It belongs to the NPL4 family.

Its pathway is protein degradation; proteasomal ubiquitin-dependent pathway. In terms of biological role, may be part of a complex that binds ubiquitinated proteins and that is necessary for the export of misfolded proteins from the ER to the cytoplasm, where they are degraded by the proteasome. The polypeptide is NPL4-like protein 2 (Arabidopsis thaliana (Mouse-ear cress)).